A 916-amino-acid polypeptide reads, in one-letter code: DNA mismatch repair protein MutS (916 aa).

The segment at 1–47 (MSEALSVPAAEGENTVTASESPDLAATSARAEKVGKQEKPEKAEKQS) is disordered. Basic and acidic residues predominate over residues 30 to 45 (RAEKVGKQEKPEKAEK). Residue 656–663 (GPNMGGKS) participates in ATP binding. Polar residues predominate over residues 843–861 (ADATPTPQMDLFSAQSSPS). The interval 843-880 (ADATPTPQMDLFSAQSSPSADDEDDKSAGQSAVPPAQA) is disordered.

Belongs to the DNA mismatch repair MutS family.

This protein is involved in the repair of mismatches in DNA. It is possible that it carries out the mismatch recognition step. This protein has a weak ATPase activity. The chain is DNA mismatch repair protein MutS from Cupriavidus metallidurans (strain ATCC 43123 / DSM 2839 / NBRC 102507 / CH34) (Ralstonia metallidurans).